Here is a 235-residue protein sequence, read N- to C-terminus: Chromosome partition protein MukE (235 aa).

The interval 204–235 (QQEPSQSSLLDGFDADDTGHHDSELTMQEGEV) is disordered.

This sequence belongs to the MukE family. In terms of assembly, interacts, and probably forms a ternary complex, with MukF and MukB. The complex formation is stimulated by calcium or magnesium.

Its subcellular location is the cytoplasm. The protein localises to the nucleoid. Its function is as follows. Involved in chromosome condensation, segregation and cell cycle progression. May participate in facilitating chromosome segregation by condensation DNA from both sides of a centrally located replisome during cell division. Probably acts via its interaction with MukB and MukF. The protein is Chromosome partition protein MukE of Photobacterium profundum (strain SS9).